A 151-amino-acid polypeptide reads, in one-letter code: MQIILLEKVVNLGNLGDVVKVKDGYARNFLIPQGKAKRANQANLAEFEARRAELERQQAEKLAAAQEVGAKLEGLMVQIARKAGMDGRLFGSVTNADVAEALAAQGFEIERSTVRMPDGPLKQIGDTQLEVALHSDVVVSITVSVLGEQQQ.

The protein belongs to the bacterial ribosomal protein bL9 family.

Binds to the 23S rRNA. The protein is Large ribosomal subunit protein bL9 of Azoarcus sp. (strain BH72).